The following is a 437-amino-acid chain: Nicotinate phosphoribosyltransferase (437 aa).

His231 is subject to Phosphohistidine; by autocatalysis.

It belongs to the NAPRTase family. In terms of processing, transiently phosphorylated on a His residue during the reaction cycle. Phosphorylation strongly increases the affinity for substrates and increases the rate of nicotinate D-ribonucleotide production. Dephosphorylation regenerates the low-affinity form of the enzyme, leading to product release.

It catalyses the reaction nicotinate + 5-phospho-alpha-D-ribose 1-diphosphate + ATP + H2O = nicotinate beta-D-ribonucleotide + ADP + phosphate + diphosphate. It functions in the pathway cofactor biosynthesis; NAD(+) biosynthesis; nicotinate D-ribonucleotide from nicotinate: step 1/1. In terms of biological role, catalyzes the synthesis of beta-nicotinate D-ribonucleotide from nicotinate and 5-phospho-D-ribose 1-phosphate at the expense of ATP. In Vibrio vulnificus (strain CMCP6), this protein is Nicotinate phosphoribosyltransferase.